A 180-amino-acid chain; its full sequence is Small ribosomal subunit protein bS16 (180 aa).

It belongs to the bacterial ribosomal protein bS16 family.

The chain is Small ribosomal subunit protein bS16 from Flavobacterium psychrophilum (strain ATCC 49511 / DSM 21280 / CIP 103535 / JIP02/86).